Consider the following 130-residue polypeptide: Small ribosomal subunit protein uS9 (130 aa).

Belongs to the universal ribosomal protein uS9 family.

The sequence is that of Small ribosomal subunit protein uS9 from Ralstonia nicotianae (strain ATCC BAA-1114 / GMI1000) (Ralstonia solanacearum).